The primary structure comprises 407 residues: Vancomycin aglycone glucosyltransferase (407 aa).

Belongs to the glycosyltransferase 28 family.

The catalysed reaction is vancomycin aglycone + UDP-alpha-D-glucose = devancoaminyl-vancomycin + UDP. Its pathway is antibiotic biosynthesis; vancomycin biosynthesis. Glucosyltransferase that transfers glucose to the 4-OH-Phegly(4) residue of vancomycin aglycone (AGV) to produce devancoaminyl-vancomycin (DVV) in the biosynthesis of glycopeptide antibiotic chloroeremomycin, a member of the vancomycin group of antibiotics. The chain is Vancomycin aglycone glucosyltransferase (gtfB) from Amycolatopsis orientalis (Nocardia orientalis).